The primary structure comprises 272 residues: 3-methyl-2-oxobutanoate hydroxymethyltransferase (272 aa).

The Mg(2+) site is built by Asp-42 and Asp-86. 3-methyl-2-oxobutanoate contacts are provided by residues 42-43 (DS), Asp-86, and Lys-116. Residue Glu-118 participates in Mg(2+) binding. The Proton acceptor role is filled by Glu-185.

This sequence belongs to the PanB family. In terms of assembly, homodecamer; pentamer of dimers. Mg(2+) is required as a cofactor.

It is found in the cytoplasm. The catalysed reaction is 3-methyl-2-oxobutanoate + (6R)-5,10-methylene-5,6,7,8-tetrahydrofolate + H2O = 2-dehydropantoate + (6S)-5,6,7,8-tetrahydrofolate. Its pathway is cofactor biosynthesis; (R)-pantothenate biosynthesis; (R)-pantoate from 3-methyl-2-oxobutanoate: step 1/2. Catalyzes the reversible reaction in which hydroxymethyl group from 5,10-methylenetetrahydrofolate is transferred onto alpha-ketoisovalerate to form ketopantoate. This Prochlorococcus marinus (strain MIT 9303) protein is 3-methyl-2-oxobutanoate hydroxymethyltransferase.